The following is a 639-amino-acid chain: C-type lectin domain-containing protein 160 (639 aa).

The N-terminal stretch at 1-19 is a signal peptide; that stretch reads MDLKSWILLSCTLLPLSVT. VWFA domains are found at residues 31 to 178 and 289 to 474; these read DIII…VGIG and DIIF…LCQV. The region spanning 491–618 is the C-type lectin domain; it reads KYGECFFPTK…WNSVSCTSEY (128 aa). The cysteines at positions 594 and 614 are disulfide-linked.

Its subcellular location is the secreted. The chain is C-type lectin domain-containing protein 160 (clec-160) from Caenorhabditis elegans.